The sequence spans 397 residues: Enoyl-[acyl-carrier-protein] reductase [NADH] (397 aa).

NAD(+) contacts are provided by residues 48–53 (GASTGY), 74–75 (FE), 111–112 (DA), and 139–140 (VA). Residue Tyr225 participates in substrate binding. Tyr235 serves as the catalytic Proton donor. NAD(+) is bound by residues Lys244 and 273–275 (VVT).

This sequence belongs to the TER reductase family. As to quaternary structure, monomer.

The catalysed reaction is a 2,3-saturated acyl-[ACP] + NAD(+) = a (2E)-enoyl-[ACP] + NADH + H(+). The protein operates within lipid metabolism; fatty acid biosynthesis. Its function is as follows. Involved in the final reduction of the elongation cycle of fatty acid synthesis (FAS II). Catalyzes the reduction of a carbon-carbon double bond in an enoyl moiety that is covalently linked to an acyl carrier protein (ACP). In Burkholderia pseudomallei (strain K96243), this protein is Enoyl-[acyl-carrier-protein] reductase [NADH].